Reading from the N-terminus, the 305-residue chain is Cbb3-type cytochrome c oxidase subunit CcoP2 (305 aa).

A run of 2 helical transmembrane segments spans residues 4–24 and 57–77; these read FWSW…VWLL and WWFM…VLYP. 2 Cytochrome c domains span residues 130–209 and 219–300; these read QALK…RSLS and VDIE…YSLS. Heme c contacts are provided by C143, C146, H147, M186, C232, C235, H236, and M277.

Component of the cbb3-type cytochrome c oxidase at least composed of CcoN, CcoO, CcoQ and CcoP. It depends on heme c as a cofactor.

The protein resides in the cell inner membrane. The protein operates within energy metabolism; oxidative phosphorylation. C-type cytochrome. Part of the cbb3-type cytochrome c oxidase complex. CcoP subunit is required for transferring electrons from donor cytochrome c via its heme groups to CcoO subunit. From there, electrons are shuttled to the catalytic binuclear center of CcoN subunit where oxygen reduction takes place. The complex also functions as a proton pump. This is Cbb3-type cytochrome c oxidase subunit CcoP2 from Stutzerimonas stutzeri (Pseudomonas stutzeri).